Here is a 250-residue protein sequence, read N- to C-terminus: DSC E3 ubiquitin ligase complex subunit 3 (250 aa).

The segment at 105–130 is disordered; the sequence is LASQDQAQSGLNSNSESPDDLQNAQT. Positions 107–130 are enriched in polar residues; sequence SQDQAQSGLNSNSESPDDLQNAQT. Asn-187 carries an N-linked (GlcNAc...) asparagine glycan. A run of 2 helical transmembrane segments spans residues 199–219 and 228–248; these read TLLAGVLIGFFGGAIACYFLW and MQLSILVGIICNFAYGLLHSY.

The protein belongs to the dsc3 family. Component of the DSC E3 ubiquitin ligase complex composed of dsc1, dsc2, dsc3 and dsc4.

It localises to the endoplasmic reticulum membrane. Its subcellular location is the golgi apparatus membrane. The protein operates within protein modification; protein ubiquitination. In terms of biological role, component of the DSC E3 ubiquitin ligase complex which is required for the sre1 transcriptional activator proteolytic cleavage to release the soluble transcription factor from the membrane in low oxygen or sterol conditions. The complex also plays an important role in the multivesicular body (MVB) pathway and functions in a post-endoplasmic reticulum pathway for protein degradation. This chain is DSC E3 ubiquitin ligase complex subunit 3 (dsc3), found in Schizosaccharomyces pombe (strain 972 / ATCC 24843) (Fission yeast).